The sequence spans 324 residues: R2-like ligand binding oxidase (324 aa).

Positions 79, 112, and 115 each coordinate Mn(2+). The 3-(O4'-tyrosyl)-valine (Val-Tyr) cross-link spans 82 to 173 (VTEDIQPFMK…VNQVRASVTY (92 aa)). Glu-112 provides a ligand contact to Fe cation. Residues Glu-178, Glu-213, and His-216 each coordinate Fe cation. Residues 304-324 (PEALEEKFGEEDAKAMSEAAG) are disordered. Residues 307–318 (LEEKFGEEDAKA) show a composition bias toward basic and acidic residues.

This sequence belongs to the ribonucleoside diphosphate reductase small chain family. R2-like ligand binding oxidase subfamily. In terms of assembly, homodimer. Fe cation is required as a cofactor. Requires Mn(2+) as cofactor.

Probable oxidase. This is R2-like ligand binding oxidase from Rhodococcus jostii (strain RHA1).